We begin with the raw amino-acid sequence, 103 residues long: Host transcription reprogramming factor 6 (103 aa).

Positions 1-19 (MRATTAFQVIAFLAVGAAA) are cleaved as a signal peptide. The C2H2-type zinc-finger motif lies at 66-92 (YWCPNQVCAKTFATQEERDHHIANTVH). The tract at residues 82–103 (ERDHHIANTVHPTNSKRDVLLQ) is disordered.

The protein resides in the secreted. The protein localises to the host nucleus. Probable secreted effector that translocates into the nuclei of host cells to reprogram the expression of targeted genes by binding on effector binding elements in rice. The chain is Host transcription reprogramming factor 6 from Pyricularia oryzae (strain 70-15 / ATCC MYA-4617 / FGSC 8958) (Rice blast fungus).